A 356-amino-acid polypeptide reads, in one-letter code: MKLTVQQLVRPEIAAIGAYHVAAADGFIKLDAMENPWPLPIELQHELAAELAQVALNRYPDADGGGLKAALRAAFAIPAAAGIVLGNGSDELITLVTQALARPGAKLLALEPSFVMYKMNALFSGLQYVGVPLRADFTLDLPATLAAIEREQPAVVFVSYPNNPTGPRYGRDEVMAICRAAPGLVVVDEAYQSFASDSFMDLAGELDNLLVMRTLSKLGLAGIRLGYAAASPAWINELNKVRPPYNVNVLTIAAARFALKHLDVFNRQAAELRAERAKLSAALAALPQLAAFPSEANFVTVRAPDAPALFQHLKASGILIKQLHGSHPLLENCLRLTVGSPDENAALLSAIQRFFV.

Residue Lys217 is modified to N6-(pyridoxal phosphate)lysine.

Belongs to the class-II pyridoxal-phosphate-dependent aminotransferase family. Histidinol-phosphate aminotransferase subfamily. Homodimer. Pyridoxal 5'-phosphate is required as a cofactor.

The catalysed reaction is L-histidinol phosphate + 2-oxoglutarate = 3-(imidazol-4-yl)-2-oxopropyl phosphate + L-glutamate. It functions in the pathway amino-acid biosynthesis; L-histidine biosynthesis; L-histidine from 5-phospho-alpha-D-ribose 1-diphosphate: step 7/9. The chain is Histidinol-phosphate aminotransferase from Chromobacterium violaceum (strain ATCC 12472 / DSM 30191 / JCM 1249 / CCUG 213 / NBRC 12614 / NCIMB 9131 / NCTC 9757 / MK).